A 405-amino-acid polypeptide reads, in one-letter code: Phosphatidylinositol 5-phosphate 4-kinase type-2 alpha (405 aa).

The residue at position 2 (Ala2) is an N-acetylalanine. Thr3 is subject to Phosphothreonine. The residue at position 14 (Ser14) is a Phosphoserine. The region spanning 33 to 405 (ASDPLLSVLM…RFLDFIGHIL (373 aa)) is the PIPK domain. The interval 59 to 65 (VMLMPDD) is required for interaction with PIP5K1A. 2 positions are modified to N6-acetyllysine: Lys89 and Lys145. Residues 288 to 328 (QEEVECEENDGEEEGESDSTHPIGTPPDSPGNTLNSSPPLA) form a disordered region. Residues 289–304 (EEVECEENDGEEEGES) are compositionally biased toward acidic residues.

Homodimer. Interacts with PIP4K2B; the interaction may regulate localization to the nucleus. Probably interacts with PIP5K1A; the interaction inhibits PIP5K1A kinase activity. Phosphorylated in tyrosines. Phosphorylation is induced by light and increases kinase activity. Detected in rod photoreceptor cells.

The protein resides in the cell membrane. It localises to the nucleus. It is found in the lysosome. The protein localises to the cytoplasm. Its subcellular location is the photoreceptor inner segment. The protein resides in the cell projection. It localises to the cilium. It is found in the photoreceptor outer segment. It carries out the reaction a 1,2-diacyl-sn-glycero-3-phospho-(1D-myo-inositol-5-phosphate) + ATP = a 1,2-diacyl-sn-glycero-3-phospho-(1D-myo-inositol-4,5-bisphosphate) + ADP + H(+). The catalysed reaction is 1,2-dihexadecanoyl-sn-glycero-3-phospho-(1D-myo-inositol-5-phosphate) + ATP = 1,2-dihexadecanoyl-sn-glycero-3-phospho-(1D-myo-inositol-4,5-bisphosphate) + ADP + H(+). The enzyme catalyses 1,2-dihexadecanoyl-sn-glycero-3-phospho-(1D-myo-inositol-5-phosphate) + GTP = 1,2-dihexadecanoyl-sn-glycero-3-phospho-(1D-myo-inositol-4,5-bisphosphate) + GDP + H(+). In rod outer segments, activated by light. Catalyzes the phosphorylation of phosphatidylinositol 5-phosphate (PtdIns5P) on the fourth hydroxyl of the myo-inositol ring, to form phosphatidylinositol 4,5-bisphosphate (PtdIns(4,5)P2). Has both ATP- and GTP-dependent kinase activities. May exert its function by regulating the levels of PtdIns5P, which functions in the cytosol by increasing AKT activity and in the nucleus signals through ING2. May regulate the pool of cytosolic PtdIns5P in response to the activation of tyrosine phosphorylation. Required for lysosome-peroxisome membrane contacts and intracellular cholesterol transport through modulating peroxisomal PtdIns(4,5)P2 level. In collaboration with PIP4K2B, has a role in mediating autophagy in times of nutrient stress. Required for autophagosome-lysosome fusion and the regulation of cellular lipid metabolism. Negatively regulates insulin signaling through a catalytic-independent mechanism. PIP4Ks interact with PIP5Ks and suppress PIP5K-mediated PtdIns(4,5)P2 synthesis and insulin-dependent conversion to PtdIns(3,4,5)P3. May be involved in thrombopoiesis, and the terminal maturation of megakaryocytes and regulation of their size. In Mus musculus (Mouse), this protein is Phosphatidylinositol 5-phosphate 4-kinase type-2 alpha.